A 120-amino-acid polypeptide reads, in one-letter code: Movement protein TGB2 (120 aa).

Topologically, residues 1-16 are cytoplasmic; that stretch reads MSSTSEPTYQLAPPDS. Residues 17 to 37 traverse the membrane as a helical segment; that stretch reads LKQVYLTLAAGFAVGLGIFLL. At 38–76 the chain is on the lumenal side; it reads RTNTLPHTGDNIHHLPHGGCYRDGTKSIRYNSPGVATSS. The helical transmembrane segment at 77–97 threads the bilayer; the sequence is NIFLPAVAVLCILALLHVPFF. Residues 98–120 are Cytoplasmic-facing; that stretch reads QPDRVRRRCCRFYWCADPHHPTV.

It belongs to the Tymovirales TGBp2 protein family.

It localises to the host endoplasmic reticulum membrane. Plays a role in viral cell-to-cell propagation, by facilitating genome transport to neighboring plant cells through plasmosdesmata,. The polypeptide is Movement protein TGB2 (ORF3) (Lolium latent virus (isolate Lolium/USA/US1/-) (LoLV)).